The chain runs to 329 residues: POU domain, class 5, transcription factor 2 (329 aa).

The span at 1 to 14 shows a compositional bias: polar residues; it reads MAGRRSSNVFPLSG. Positions 1 to 24 are disordered; that stretch reads MAGRRSSNVFPLSGNSGGGLEVDT. In terms of domain architecture, POU-specific spans 107 to 181; the sequence is DVSAIQKEME…LLKMWLEEVD (75 aa). The homeobox DNA-binding region spans 199 to 258; sequence RKRRRASRERRIGSNLEKLFLQCPEPTPQQISYIAGRLRLQKDLVQVWFSNRSQMGSWPT.

Belongs to the POU transcription factor family. Class-5 subfamily. In terms of tissue distribution, in adult brain, expressed in the olfactory bulb, becoming specifically concentrated in the mitral cell layer. Also found in the pyramidal cell layer of the hippocampus, in the granule cell layer of the cerebellum and in the cortex.

Its subcellular location is the nucleus. Functionally, transcription factor that binds preferentially to the octamer motif (5'-ATGTTAAT-3'). May exert a regulatory function in meiotic events that are required for terminal differentiation of male germ cell. This chain is POU domain, class 5, transcription factor 2 (Pou5f2), found in Mus musculus (Mouse).